The primary structure comprises 154 residues: UPF0756 membrane protein YtwI (154 aa).

4 helical membrane passes run 8-28, 54-74, 87-107, and 117-137; these read FLIL…LFAV, WGVT…EIGF, WIAL…LTLL, and LVIG…GPLI.

This sequence belongs to the UPF0756 family.

The protein localises to the cell membrane. This is UPF0756 membrane protein YtwI (ytwI) from Bacillus subtilis (strain 168).